Reading from the N-terminus, the 227-residue chain is Lipoprotein-releasing system ATP-binding protein LolD (227 aa).

An ABC transporter domain is found at Leu6 to Glu227. Position 42-49 (Gly42–Ser49) interacts with ATP.

The protein belongs to the ABC transporter superfamily. Lipoprotein translocase (TC 3.A.1.125) family. The complex is composed of two ATP-binding proteins (LolD) and two transmembrane proteins (LolC and LolE).

Its subcellular location is the cell inner membrane. In terms of biological role, part of the ABC transporter complex LolCDE involved in the translocation of mature outer membrane-directed lipoproteins, from the inner membrane to the periplasmic chaperone, LolA. Responsible for the formation of the LolA-lipoprotein complex in an ATP-dependent manner. In Legionella pneumophila (strain Paris), this protein is Lipoprotein-releasing system ATP-binding protein LolD.